The following is a 215-amino-acid chain: MLQVYLVRHGETQWNAERRIQGQSDSPLTAKGEQQAMQVATRAKELGITHIISSDLGRTRRTAEIIAQACGCDIIFDSRLRELNMGVLEKRHIDSLTEEEENWRRQLVNGTVDGRIPEGESMQELSDRVNAALESCRDLPQGSRPLLVSHGIALGCLVSTILGLPAWAERRLRLRNCSISRVDYQESLWLASGWVVETAGDISHLDAPALDELQR.

Substrate is bound by residues 8–15, 21–22, arginine 58, arginine 60, 82–85, 104–105, and 151–152; these read RHGETQWN, QG, ELNM, RR, and GI. Histidine 9 (tele-phosphohistidine intermediate) is an active-site residue. The Proton donor/acceptor role is filled by glutamate 82.

The protein belongs to the phosphoglycerate mutase family. GpmB subfamily.

The enzyme catalyses (2R)-2-phosphoglycerate = (2R)-3-phosphoglycerate. It participates in carbohydrate degradation; glycolysis; pyruvate from D-glyceraldehyde 3-phosphate: step 3/5. The chain is Probable phosphoglycerate mutase GpmB from Escherichia coli O9:H4 (strain HS).